The chain runs to 516 residues: Solute carrier family 49 member A3 (516 aa).

The segment covering 1 to 10 has biased composition (basic and acidic residues); sequence MAGTMDRLED. Positions 1-22 are disordered; it reads MAGTMDRLEDCNSPETSGTAGD. Transmembrane regions (helical) follow at residues 34 to 54, 74 to 94, 104 to 124, 139 to 159, 170 to 190, 199 to 219, 253 to 273, 289 to 309, 321 to 341, 344 to 364, 382 to 402, and 425 to 445; these read WVFL…WLSF, WLSL…IWVL, ILGA…CLPV, LCAL…ALWF, ISTM…PALV, MLGI…VCLW, VLLA…SALL, LCGA…GLYV, IGLC…QLQG, LALA…APVV, GLIF…LTAL, and VSLL…VIFF. The segment at 453 to 516 is disordered; the sequence is EAESGGSSSP…EWAETMPRDV (64 aa). Positions 504 to 516 are enriched in basic and acidic residues; the sequence is GHSEWAETMPRDV.

The protein belongs to the major facilitator superfamily.

Its subcellular location is the membrane. This chain is Solute carrier family 49 member A3 (Slc49a3), found in Mus musculus (Mouse).